The following is a 398-amino-acid chain: MTHTPSFDLSDIKSTLSTNVLHADDAYALENDVAPPIHISTTYTYPGTPDTLQPFTKLAEEDFPYYARISGNNVDRAEASLSSVLGAPSVVYSSGLAAIYGLLSYLNPKHIAVHKPGFGGYSGTIQIIARINRLTGLETSFIDGKCDAIGEGDVIWLETPLNPLGIAFDIPFYKELAKKKGAILVVDSTFAPPPIQDALVLGADYVVHSATKYLAGHSDVLAGVTASKDRSKILDLKADRAYLGTILHPQQAFLLLRSLRTFPLRIAKHSENGFLVAQHLNKLATDEQFATSLGIDSSLILEVYHNSLQTKEFVAKNLTGGHASCFSVLLKSDTVAKHLCCELKYFHHATSLGSVESLIEWRRMTDSKIDPRLVRLSIGIEDAADLIADLNRVFASLS.

Lysine 212 carries the post-translational modification N6-(pyridoxal phosphate)lysine.

Belongs to the trans-sulfuration enzymes family. Pyridoxal 5'-phosphate serves as cofactor.

This is an uncharacterized protein from Schizosaccharomyces pombe (strain 972 / ATCC 24843) (Fission yeast).